The following is a 241-amino-acid chain: MSESSNTNLEQAKQEGKYIRTIRSFVKREGRLTKGQAAAIEKCWPIMGLEHKNGMLDLSEVFGNNNDVVLEIGFGMGKSLVEMAKNAPHLNFIGIEVHRPGVGACLMDADEAGITNLRIFEHDAVEVLADCIADESLTTLQLFFPDPWHKKRHHKRRIVQGEFVEKLRSQLKMGGVFHMATDWENYAEHMLEVMQAAPGFKNQSTTNDYVPRPDLRPLTKFEQRGHRLGHGVWDLMFERTK.

S-adenosyl-L-methionine-binding residues include glutamate 71, glutamate 96, aspartate 123, and aspartate 146. Residue aspartate 146 is part of the active site. Residues lysine 150, aspartate 182, and 219–222 each bind substrate; that span reads TKFE.

Belongs to the class I-like SAM-binding methyltransferase superfamily. TrmB family.

It catalyses the reaction guanosine(46) in tRNA + S-adenosyl-L-methionine = N(7)-methylguanosine(46) in tRNA + S-adenosyl-L-homocysteine. It participates in tRNA modification; N(7)-methylguanine-tRNA biosynthesis. Its function is as follows. Catalyzes the formation of N(7)-methylguanine at position 46 (m7G46) in tRNA. This is tRNA (guanine-N(7)-)-methyltransferase from Pseudoalteromonas translucida (strain TAC 125).